Consider the following 311-residue polypeptide: Lipid A biosynthesis acyltransferase (311 aa).

A helical membrane pass occupies residues 19–39 (WLFWLGVAIWRSILCLPYPIL). An HXXXXD motif motif is present at residues 134-139 (HFLTLE).

The protein belongs to the LpxL/LpxM/LpxP family.

It localises to the cell inner membrane. It carries out the reaction an alpha-Kdo-(2-&gt;4)-alpha-Kdo-(2-&gt;6)-lipid IVA + a fatty acyl-[ACP] = an alpha-Kdo-(2-&gt;4)-alpha-Kdo-(2-&gt;6)-(acyl)-lipid IVA + holo-[ACP]. Its pathway is glycolipid biosynthesis; KDO(2)-lipid A biosynthesis; KDO(2)-lipid A from CMP-3-deoxy-D-manno-octulosonate and lipid IV(A): step 3/4. It participates in bacterial outer membrane biogenesis; lipopolysaccharide biosynthesis. Functionally, catalyzes the transfer of an acyl chain from an acyl-[acyl-carrier-protein] (ACP) to a Kdo(2)-lipid IV(A) to form a Kdo(2)-(acyl)-lipid IV(A). The sequence is that of Lipid A biosynthesis acyltransferase from Haemophilus influenzae (strain ATCC 51907 / DSM 11121 / KW20 / Rd).